Here is a 478-residue protein sequence, read N- to C-terminus: Zinc finger protein 410 (478 aa).

The segment at 187–213 (NAKTSSNGENVHLGSGDGQSKDSGPLP) is disordered. 5 consecutive C2H2-type zinc fingers follow at residues 219-243 (LKCTVEGCDRTFVWPAHFKYHLKTH), 249-273 (FICPAEGCGKSFYVLQRLKVHMRTH), 279-303 (FMCHESGCGKQFTTAGNLKNHRRIH), 309-333 (FLCEAQGCGRSFAEYSSLRKHLVVH), and 339-362 (HQCQVCGKTFSQSGSRNVHMRKHH). Positions 221, 226, 239, 243, 251, 256, 269, 273, 281, 286, 299, 303, 311, 316, 329, 333, 341, 344, 357, and 361 each coordinate Zn(2+).

As to quaternary structure, interacts with CDKN2A/p14ARF. Sumoylated. Sumoylation increases its half-life, possibly by blocking ubiquitin-mediated degradation. In terms of processing, O-glycosylated. O-GlcNAcylation may occur in response to increasing glucose levels and affect transcription factor activity. Widely expressed.

It is found in the nucleus. It localises to the chromosome. Functionally, transcription factor that binds to the sequence motif 5'-CATCCCATAATA-3', and is specifically required to silence expression of fetal hemoglobin in adult erythroid cells. Prevents expression of fetal hemoglobin genes HBG1 and HBG2 through CHD4: acts as a direct transcriptional activator of CHD4, a central component of the NuRD complex that represses transcription of fetal hemoglobin genes HBG1 and HBG2 in erythroid cells. May also activate transcription of matrix-remodeling genes such as MMP1 during fibroblast senescence. May activate transcription of the gap junction gene GJC1, perhaps in response to increasing glucose. However, recent studies suggest that ZNF410 is dedicated to regulate expression of a single gene: CHD4. In Homo sapiens (Human), this protein is Zinc finger protein 410.